The following is a 523-amino-acid chain: Cytidine and dCMP deaminase domain-containing protein 1 (523 aa).

Positions 1 to 11 (MKETDQMQSLE) are enriched in polar residues. 2 disordered regions span residues 1–27 (MKET…GSMT) and 55–81 (QGQK…RVST). One can recognise a CMP/dCMP-type deaminase 1 domain in the interval 71 to 169 (GDNEELTRVS…SLLTEASSSE (99 aa)). Zn(2+) contacts are provided by His-110, Cys-135, and Cys-138. The short motif at 272 to 284 (NLRQNMKDLILLL) is the Nuclear export signal element. The CMP/dCMP-type deaminase 2 domain occupies 318-483 (EVARHCMVQA…LNPSEAYSLD (166 aa)). His-399 serves as a coordination point for Zn(2+). Glu-401 (proton donor) is an active-site residue. The Zn(2+) site is built by Cys-427 and Cys-430. The interval 478–523 (EAYSLDPNEPERRENGVLRRRSAKDEQRSSKRPRLETRSAGRATLQ) is disordered. Basic and acidic residues predominate over residues 486-516 (EPERRENGVLRRRSAKDEQRSSKRPRLETRS). A Bipartite nuclear localization signal motif is present at residues 489–511 (RRENGVLRRRSAKDEQRSSKRPR).

Belongs to the cytidine and deoxycytidylate deaminase family. Zn(2+) is required as a cofactor.

The protein resides in the cytoplasm. Its subcellular location is the nucleus. The enzyme catalyses 2'-deoxycytidine + H2O + H(+) = 2'-deoxyuridine + NH4(+). The catalysed reaction is cytidine + H2O + H(+) = uridine + NH4(+). Functionally, catalyzes the deamination of cytidine and deoxycytidine into uridine and deoxyuridine, respectively. May play an important role in testicular development and spermatogenesis. This chain is Cytidine and dCMP deaminase domain-containing protein 1 (Cdadc1), found in Mus musculus (Mouse).